The chain runs to 1234 residues: DNA-directed RNA polymerase I subunit RPA2 (1234 aa).

A C4-type zinc finger spans residues 1119–1150; that stretch reads CRQCGSFLSTQPTVSPFIGKRKAVSTVRCRNC.

Belongs to the RNA polymerase beta chain family. Component of the RNA polymerase I (Pol I) complex consisting of 14 subunits.

The protein resides in the nucleus. It localises to the nucleolus. It catalyses the reaction RNA(n) + a ribonucleoside 5'-triphosphate = RNA(n+1) + diphosphate. In terms of biological role, DNA-dependent RNA polymerase catalyzes the transcription of DNA into RNA using the four ribonucleoside triphosphates as substrates. Second largest core component of RNA polymerase I which synthesizes ribosomal RNA precursors. Proposed to contribute to the polymerase catalytic activity and forms the polymerase active center together with the largest subunit. Pol I is composed of mobile elements and RPA2 is part of the core element with the central large cleft and probably a clamp element that moves to open and close the cleft. The chain is DNA-directed RNA polymerase I subunit RPA2 (acr-2) from Neurospora crassa (strain ATCC 24698 / 74-OR23-1A / CBS 708.71 / DSM 1257 / FGSC 987).